A 631-amino-acid chain; its full sequence is Dolichyl-diphosphooligosaccharide--protein glycosyltransferase subunit 2 (631 aa).

The N-terminal stretch at 1–22 is a signal peptide; that stretch reads MASPGASTVFLLALTILAGTQA. Topologically, residues 23–540 are lumenal; sequence LTPTHYLTKP…REPEKRPPTV (518 aa). Residue Asn-106 is glycosylated (N-linked (GlcNAc...) asparagine). Lys-154 is covalently cross-linked (Glycyl lysine isopeptide (Lys-Gly) (interchain with G-Cter in ubiquitin)). The helical transmembrane segment at 541–561 threads the bilayer; that stretch reads VSNTFTALILSPLLLLFALWI. Residues 562–571 are Cytoplasmic-facing; that stretch reads RIGANVSNFT. Residues 572–592 traverse the membrane as a helical segment; sequence FAPSTIIFHLGHAAMLGLMYV. The Lumenal segment spans residues 593 to 596; that stretch reads YWTQ. A helical membrane pass occupies residues 597–617; sequence LNMFQTLKYLAILGSVTFLAG. The Cytoplasmic segment spans residues 618–631; it reads NRMLAQQAIKRTAH.

This sequence belongs to the SWP1 family. In terms of assembly, component of the oligosaccharyltransferase (OST) complex. OST exists in two different complex forms which contain common core subunits RPN1, RPN2, OST48, OST4, DAD1 and TMEM258, either STT3A or STT3B as catalytic subunits, and form-specific accessory subunits. STT3A complex assembly occurs through the formation of 3 subcomplexes. Subcomplex 1 contains RPN1 and TMEM258, subcomplex 2 contains the STT3A-specific subunits STT3A, DC2/OSTC, and KCP2 as well as the core subunit OST4, and subcomplex 3 contains RPN2, DAD1, and OST48. The STT3A complex can form stable complexes with the Sec61 complex or with both the Sec61 and TRAP complexes. Interacts with DDI2. Interacts with TMEM35A/NACHO.

The protein resides in the endoplasmic reticulum. Its subcellular location is the endoplasmic reticulum membrane. The protein operates within protein modification; protein glycosylation. In terms of biological role, subunit of the oligosaccharyl transferase (OST) complex that catalyzes the initial transfer of a defined glycan (Glc(3)Man(9)GlcNAc(2) in eukaryotes) from the lipid carrier dolichol-pyrophosphate to an asparagine residue within an Asn-X-Ser/Thr consensus motif in nascent polypeptide chains, the first step in protein N-glycosylation. N-glycosylation occurs cotranslationally and the complex associates with the Sec61 complex at the channel-forming translocon complex that mediates protein translocation across the endoplasmic reticulum (ER). All subunits are required for a maximal enzyme activity. The protein is Dolichyl-diphosphooligosaccharide--protein glycosyltransferase subunit 2 of Canis lupus familiaris (Dog).